Here is a 139-residue protein sequence, read N- to C-terminus: Prefoldin subunit alpha (139 aa).

Belongs to the prefoldin subunit alpha family. Heterohexamer of two alpha and four beta subunits.

Its subcellular location is the cytoplasm. Molecular chaperone capable of stabilizing a range of proteins. Seems to fulfill an ATP-independent, HSP70-like function in archaeal de novo protein folding. The protein is Prefoldin subunit alpha of Picrophilus torridus (strain ATCC 700027 / DSM 9790 / JCM 10055 / NBRC 100828 / KAW 2/3).